The primary structure comprises 144 residues: NADH dehydrogenase [ubiquinone] 1 alpha subcomplex subunit 13 (144 aa).

Ala2 bears the N-acetylalanine mark. Residues Leu30 to Met51 form a helical membrane-spanning segment.

In terms of assembly, complex I is composed of 45 different subunits. Interacts with CARD15, but not with CARD4. Interacts with STAT3, but not with STAT1, STAT2 and STAT5A. Interacts with OLFM4.

The protein localises to the mitochondrion inner membrane. It localises to the nucleus. Its function is as follows. Accessory subunit of the mitochondrial membrane respiratory chain NADH dehydrogenase (Complex I), that is believed not to be involved in catalysis. Complex I functions in the transfer of electrons from NADH to the respiratory chain. The immediate electron acceptor for the enzyme is believed to be ubiquinone. Involved in the interferon/all-trans-retinoic acid (IFN/RA) induced cell death. This apoptotic activity is inhibited by interaction with viral IRF1. Prevents the transactivation of STAT3 target genes. May play a role in CARD15-mediated innate mucosal responses and serve to regulate intestinal epithelial cell responses to microbes. The polypeptide is NADH dehydrogenase [ubiquinone] 1 alpha subcomplex subunit 13 (NDUFA13) (Bos taurus (Bovine)).